Consider the following 631-residue polypeptide: ATP-dependent RNA helicase mrh4, mitochondrial (631 aa).

The transit peptide at 1–45 (MNRLGRLPLPLPPSVCLFCQSRATTPLPPSLQATRSMATARLRRR) directs the protein to the mitochondrion. The segment at 68–111 (KERFGPFAGMNQTEARIRDKPRTRSRAAQKRSGEPEEDSQKESP) is disordered. The segment covering 98 to 108 (RSGEPEEDSQK) has biased composition (basic and acidic residues). The Q motif motif lies at 141–174 (TSFDQFQLLPVVRNSISSQALPGLVDVTPTPIQR). Residues 180 to 193 (LLEEPKTEKKPTKA) show a composition bias toward basic and acidic residues. Positions 180–199 (LLEEPKTEKKPTKADDDEPQ) are disordered. The Helicase ATP-binding domain maps to 194-406 (DDDEPQYDQY…RKRYPDIKRL (213 aa)). ATP is bound at residue 207–214 (AETGSGKT). The interval 229–249 (EARDKELEKKEQEEKAREREE) is disordered. The short motif at 353-356 (DEAD) is the DEAD box element. The 177-residue stretch at 455-631 (GPYASYVAPK…EGMFRGQALI (177 aa)) folds into the Helicase C-terminal domain.

It belongs to the DEAD box helicase family. MRH4 subfamily.

It is found in the mitochondrion. It carries out the reaction ATP + H2O = ADP + phosphate + H(+). In terms of biological role, ATP-binding RNA helicase involved in mitochondrial RNA metabolism. Required for maintenance of mitochondrial DNA. The polypeptide is ATP-dependent RNA helicase mrh4, mitochondrial (mrh4) (Neosartorya fischeri (strain ATCC 1020 / DSM 3700 / CBS 544.65 / FGSC A1164 / JCM 1740 / NRRL 181 / WB 181) (Aspergillus fischerianus)).